Consider the following 235-residue polypeptide: Sugar fermentation stimulation protein homolog (235 aa).

Belongs to the SfsA family.

This chain is Sugar fermentation stimulation protein homolog, found in Azotobacter vinelandii (strain DJ / ATCC BAA-1303).